We begin with the raw amino-acid sequence, 1609 residues long: Probable cation-transporting ATPase I (1609 aa).

The next 10 helical transmembrane spans lie at G30–V50, L176–V196, I238–L258, L357–I377, V641–G661, W673–S693, I778–V798, L921–V941, T969–L989, and A997–A1017. The 4-aspartylphosphate intermediate role is filled by D1053. Mg(2+)-binding residues include D1335 and D1339. The next 2 helical transmembrane spans lie at I1396–A1416 and L1426–Q1446. The tract at residues Y1447 to P1476 is disordered. Residues E1449 to D1462 show a composition bias toward acidic residues. 2 consecutive transmembrane segments (helical) span residues V1542–I1562 and P1573–A1593.

The protein belongs to the cation transport ATPase (P-type) (TC 3.A.3) family.

The protein localises to the cell membrane. The enzyme catalyses ATP + H2O = ADP + phosphate + H(+). The protein is Probable cation-transporting ATPase I (ctpI) of Mycobacterium leprae (strain TN).